We begin with the raw amino-acid sequence, 124 residues long: Small ribosomal subunit protein uS13 (124 aa).

The segment at 95–124 is disordered; the sequence is GLPVRGQRTHTNARTRKGPRRSVMGKRKKA.

The protein belongs to the universal ribosomal protein uS13 family. As to quaternary structure, part of the 30S ribosomal subunit. Forms a loose heterodimer with protein S19. Forms two bridges to the 50S subunit in the 70S ribosome.

Located at the top of the head of the 30S subunit, it contacts several helices of the 16S rRNA. In the 70S ribosome it contacts the 23S rRNA (bridge B1a) and protein L5 of the 50S subunit (bridge B1b), connecting the 2 subunits; these bridges are implicated in subunit movement. Contacts the tRNAs in the A and P-sites. The protein is Small ribosomal subunit protein uS13 of Syntrophobacter fumaroxidans (strain DSM 10017 / MPOB).